The following is a 57-amino-acid chain: Potassium channel toxin alpha-KTx 23.3 (57 aa).

The first 23 residues, 1–23, serve as a signal peptide directing secretion; it reads MKMSIVIILLLFTCLIATNGASG. 4 cysteine pairs are disulfide-bonded: cysteine 26–cysteine 46, cysteine 32–cysteine 51, cysteine 36–cysteine 53, and cysteine 41–cysteine 56.

This sequence belongs to the short scorpion toxin superfamily. Potassium channel inhibitor family. Alpha-KTx 23 subfamily. As to expression, expressed by the venom gland.

The protein resides in the secreted. Its function is as follows. This toxin shows both immunosuppressive and anti-inflammatory activities. It has the potential to inhibit human T cell activation, since it reduces IL-2 secretion and the expression of T cell activation marker CD69 and acts as an anti-inflammatory agent, since it provokes the reduction of secretion of both IFN-gamma and TNF-alpha. In vivo, the delayed-type hypersensitivity response in rat autoimmune disease model is ameliorated in the presence of this toxin. Acts by blocking Kv1.3/KCNA3 potassium channels of T-lymphocytes. The protein is Potassium channel toxin alpha-KTx 23.3 of Scorpiops tibetanus (Scorpion).